We begin with the raw amino-acid sequence, 373 residues long: Glutamate 5-kinase (373 aa).

Position 15 (lysine 15) interacts with ATP. Serine 55, aspartate 142, and asparagine 154 together coordinate substrate. Residues 174–175 and 216–222 each bind ATP; these read TD and TGGMVTK. The PUA domain maps to 281–359; that stretch reads SGKIIVDDGA…GEIEAILGYK (79 aa).

The protein belongs to the glutamate 5-kinase family.

It is found in the cytoplasm. It carries out the reaction L-glutamate + ATP = L-glutamyl 5-phosphate + ADP. It participates in amino-acid biosynthesis; L-proline biosynthesis; L-glutamate 5-semialdehyde from L-glutamate: step 1/2. Functionally, catalyzes the transfer of a phosphate group to glutamate to form L-glutamate 5-phosphate. In Geobacter sulfurreducens (strain ATCC 51573 / DSM 12127 / PCA), this protein is Glutamate 5-kinase.